A 282-amino-acid chain; its full sequence is Rhomboid protease GlpG (282 aa).

The next 6 helical transmembrane spans lie at 96 to 116 (AGPL…WMQF), 144 to 164 (GLLH…WYLG), 176 to 196 (LFVI…LFSG), 197 to 217 (SHFG…WLTG), 225 to 242 (IGVP…LIVG), and 247 to 269 (FGLS…MALW). The active-site Nucleophile is the serine 203. Histidine 256 is an active-site residue.

It belongs to the peptidase S54 family.

It localises to the cell inner membrane. The catalysed reaction is Cleaves type-1 transmembrane domains using a catalytic dyad composed of serine and histidine that are contributed by different transmembrane domains.. Rhomboid-type serine protease that catalyzes intramembrane proteolysis. The polypeptide is Rhomboid protease GlpG (Photorhabdus laumondii subsp. laumondii (strain DSM 15139 / CIP 105565 / TT01) (Photorhabdus luminescens subsp. laumondii)).